The following is a 477-amino-acid chain: Shikimate biosynthesis protein AroDE (477 aa).

Residues 1–209 form a 3-dehydroquinate dehydratase region; it reads MLCATVSGPS…LEELLSYNYS (209 aa). 3-dehydroquinate is bound by residues S21, 29–31, and 56–58; these read ELR and TFR. Catalysis depends on H111, which acts as the Proton donor/acceptor; for 3-dehydroquinate dehydratase activity. Residue K134 is the Schiff-base intermediate with substrate; for 3-dehydroquinate dehydratase activity of the active site. The 3-dehydroquinate site is built by R172 and Q197. Positions 210 to 477 are shikimate 5-dehydrogenase; it reads KLSEKSHIYG…NYVKNFMAKV (268 aa). 228-230 lines the shikimate pocket; that stretch reads SIS. The active-site Proton acceptor; for shikimate dehydrogenase activity is K279. N300 and D315 together coordinate shikimate. NADP(+) contacts are provided by residues 339 to 343, 362 to 364, and G438; these read GAGGA and NRT. Q445 contacts shikimate.

This sequence in the N-terminal section; belongs to the type-I 3-dehydroquinase family. The protein in the C-terminal section; belongs to the shikimate dehydrogenase family.

The catalysed reaction is 3-dehydroquinate = 3-dehydroshikimate + H2O. The enzyme catalyses shikimate + NADP(+) = 3-dehydroshikimate + NADPH + H(+). It functions in the pathway metabolic intermediate biosynthesis; chorismate biosynthesis; chorismate from D-erythrose 4-phosphate and phosphoenolpyruvate: step 3/7. It participates in metabolic intermediate biosynthesis; chorismate biosynthesis; chorismate from D-erythrose 4-phosphate and phosphoenolpyruvate: step 4/7. In terms of biological role, bifunctional enzyme that catalyzes two sequential steps of the aromatic amino acids biosynthetic pathway. In the first reaction, the AroD domain catalyzes the cis-dehydration of 3-dehydroquinate (DHQ) and introduces the first double bond of the aromatic ring to yield 3-dehydroshikimate; in the second reaction, the AroE domain catalyzes the reversible NADPH linked reduction of 3-dehydroshikimate (DHSA) to yield shikimate (SA). The sequence is that of Shikimate biosynthesis protein AroDE from Chlamydia pneumoniae (Chlamydophila pneumoniae).